The primary structure comprises 29 residues: Galanin (29 aa).

Ala-29 is subject to Alanine amide.

It belongs to the galanin family.

Its subcellular location is the secreted. Contracts smooth muscle of the gastrointestinal and genitourinary tract, regulates growth hormone release, modulates insulin release, and may be involved in the control of adrenal secretion. The sequence is that of Galanin (GAL) from Alligator mississippiensis (American alligator).